A 334-amino-acid chain; its full sequence is Glutamyl-tRNA reductase (334 aa).

Residues Thr-49–Arg-52, Ser-107, Glu-112–Gln-114, and Gln-118 each bind substrate. The active-site Nucleophile is the Cys-50. NADP(+) is bound at residue Gly-186 to Gly-191.

It belongs to the glutamyl-tRNA reductase family. As to quaternary structure, homodimer.

The enzyme catalyses (S)-4-amino-5-oxopentanoate + tRNA(Glu) + NADP(+) = L-glutamyl-tRNA(Glu) + NADPH + H(+). The protein operates within porphyrin-containing compound metabolism; protoporphyrin-IX biosynthesis; 5-aminolevulinate from L-glutamyl-tRNA(Glu): step 1/2. Catalyzes the NADPH-dependent reduction of glutamyl-tRNA(Glu) to glutamate 1-semialdehyde (GSA). The protein is Glutamyl-tRNA reductase of Alkaliphilus oremlandii (strain OhILAs) (Clostridium oremlandii (strain OhILAs)).